The primary structure comprises 304 residues: Solute carrier family 25 member 34 (304 aa).

3 Solcar repeats span residues 4-97 (VPPA…ACQA), 101-194 (QQPG…AKAW), and 204-295 (DSWL…LRKL). The next 6 helical transmembrane spans lie at 7–27 (AVDL…TNPL), 45–65 (TYPR…RADG), 98–120 (GLSQ…GAFV), 170–191 (VGGA…FASA), 206–226 (WLVA…VMTP), and 278–301 (LGPH…WGQH).

It belongs to the mitochondrial carrier (TC 2.A.29) family.

The protein localises to the mitochondrion inner membrane. It carries out the reaction a dicarboxylate(in) + sulfate(out) = a dicarboxylate(out) + sulfate(in). In terms of biological role, putative antiporter that exchanges dicarboxylates and sulfur oxoanions across the inner membrane of mitochondria. This Bos taurus (Bovine) protein is Solute carrier family 25 member 34 (SLC25A34).